Consider the following 133-residue polypeptide: Fatty acid-binding protein, heart (133 aa).

An N-acetylalanine modification is found at Ala2. Thr8 carries the post-translational modification Phosphothreonine. Tyr20 carries the post-translational modification Phosphotyrosine; by Tyr-kinases. Phosphoserine is present on Ser23. A Phosphothreonine modification is found at Thr30. Ser83 bears the Phosphoserine mark. 127 to 129 (RTY) is a binding site for (9Z)-octadecenoate. 127-129 (RTY) serves as a coordination point for hexadecanoate. Octadecanoate is bound at residue 127–129 (RTY).

Belongs to the calycin superfamily. Fatty-acid binding protein (FABP) family.

It is found in the cytoplasm. FABPs are thought to play a role in the intracellular transport of long-chain fatty acids and their acyl-CoA esters. FABPs are important elements related to the hibernating state in mammals. The chain is Fatty acid-binding protein, heart (FABP3) from Myotis lucifugus (Little brown bat).